A 624-amino-acid chain; its full sequence is MQPEPRPSGAGAHTQFLPLRSQRPEGAGDTVMYASTECKAEVTPSQHGNRTFSYTLEDHTKQAFGIMNELRLSQQLCDVTLQVKYEDAPAAQFMAHKVVLASSSPVFKAMFTNGLREQGMEVVSIEGIHPKVMERLIEFAYTASISMGEKCVLHVMNGAVMYQIDSVVRACSDFLVQQLDPSNAIGIANFAEQIGCAELHQRAREYIYMHFGEVAKQEEFFNLSHCQLVTLISRDDLNVRCESEVFHACINWVKYDCEQRRFYVQALLRAVRCHSLTPHFLQMQLQKCEILQSDSRCKDYLVKIFQELTLHKPTQVMPCRAPKVGRLIYTAGGYFRQSLSYLEAYNPSDGTWLRLADLQVPRSGLAGCVVGGLLYAVGGRNNSPDGNTDSSALDCYNPMTNQWSPCAPMSVPRNRIGVGVIDGHIYAVGGSHGCIHHNSVERYEPERDEWHLVAPMLTRRIGVGVAVLNRLLYAVGGFDGTNRLNSAECYYPERNEWRMITPMNTIRSGAGVCVLHNCIYAAGGYDGQDQLNSVERYDVETETWTFVAPMKHRRSALGITVHQGRIYVLGGYDGHTFLDSVECYDPDTDTWSEVTRMTSGRSGVGVAVTMEPCRKQIDQQNCTC.

Residues 1 to 27 (MQPEPRPSGAGAHTQFLPLRSQRPEGA) are disordered. C38 bears the S-(2-succinyl)cysteine mark. The BTB domain maps to 77 to 149 (CDVTLQVKYE…AYTASISMGE (73 aa)). An N5-[4-(S-L-cysteinyl)-5-methyl-1H-imidazol-2-yl]-L-ornithine (Arg-Cys) (interchain with C-151 in KEAP1) cross-link involves residue R135. S-(2-succinyl)cysteine occurs at positions 151 and 241. C151 carries the S-(2,3-dicarboxypropyl)cysteine; alternate modification. C151 is subject to S-nitrosocysteine; alternate. An N5-[4-(S-L-cysteinyl)-5-methyl-1H-imidazol-2-yl]-L-ornithine (Cys-Arg) (interchain with R-135 in KEAP1) cross-link involves residue C151. The region spanning 184 to 286 (AIGIANFAEQ…TPHFLQMQLQ (103 aa)) is the BACK domain. An S-(2,3-dicarboxypropyl)cysteine mark is found at C257 and C273. 2 positions are modified to S-(2-succinyl)cysteine: C288 and C319. S-(2,3-dicarboxypropyl)cysteine; alternate is present on C288. Kelch repeat units lie at residues 327-372 (LIYT…VVGG), 373-423 (LLYA…VIDG), 424-470 (HIYA…VLNR), 471-517 (LLYA…VLHN), 519-564 (IYAA…VHQG), and 565-611 (RIYV…VTME). The residue at position 434 (C434) is an S-cGMP-cysteine. At C613 the chain carries S-(2-succinyl)cysteine.

This sequence belongs to the KEAP1 family. In terms of assembly, component of the BCR(KEAP1) E3 ubiquitin ligase complex, at least composed of 2 molecules of CUL3, 2 molecules of KEAP1, and RBX1. Interacts with NFE2L2/NRF2; the interaction is direct. Forms a ternary complex with NFE2L2/NRF2 and PGAM5. Interacts with (phosphorylated) SQSTM1/p62; the interaction is direct and inactivates the BCR(KEAP1) complex by sequestering it in inclusion bodies, promoting its degradation. Interacts with NFE2L1. Interacts with BPTF and PTMA. Interacts with MAP1LC3B. Interacts indirectly with ENC1. Interacts with SESN1 and SESN2. Interacts with HSP90AA1 and HSP90AB1. Interacts with PGCKA1; this interaction prevents the ubiquitination of KEAP1 by TRIM25, thus protecting KEAP1 protein from degradation. In terms of processing, non-enzymatic covalent modifications of reactive cysteines by electrophile metabolites inactivate the BCR(KEAP1) complex. Accumulation of fumarate promotes the formation of cysteine S-succination (S-(2-succinyl)cysteine), leading to inactivate the BCR(KEAP1) complex and promote NFE2L2/NRF2 nuclear accumulation and activation. Nitric oxide-dependent 8-Nitro-cGMP formation promotes cysteine guanylation (S-cGMP-cysteine), leading to NFE2L2/NRF2 nuclear accumulation and activation. Itaconate, an anti-inflammatory metabolite generated in response to lipopolysaccharide, alkylates cysteines, activating NFE2L2/NRF2. Methylglyoxal, a reactive metabolite that accumulates when the glycolytic enzyme PGK1 is inhibited, promotes formation of a methylimidazole cross-link between proximal Cys-151 and Arg-135 on another KEAP1 molecule, resulting in an inactive dimer that inactivates the BCR(KEAP1) complex. Degraded via a proteasomal-independent process during selective autophagy: interaction with phosphorylated SQSTM1/p62 sequesters KEAP1 in inclusion bodies, leading to its degradation. Post-translationally, auto-ubiquitinated by the BCR(KEAP1) complex. Quinone-induced oxidative stress, but not sulforaphane, increases its ubiquitination. Ubiquitination and subsequent degradation is most pronounced following prolonged exposure of cells to oxidative stress, particularly in glutathione-deficient cells that are highly susceptible to oxidative stress. Deubiquitinated by USP25; leading to stabilization. Ubiquitinated by TRIM25; leading to degradation upon ER stress.

It localises to the cytoplasm. It is found in the nucleus. Its pathway is protein modification; protein ubiquitination. Its activity is regulated as follows. Ubiquitin ligase activity of the BCR(KEAP1) complex is inhibited by oxidative stress and electrophile metabolites such as sulforaphane. Electrophile metabolites react with reactive cysteine residues in KEAP1 and trigger non-enzymatic covalent modifications of these cysteine residues, leading to inactivate the ubiquitin ligase activity of the BCR(KEAP1) complex. Selective autophagy also inactivates the BCR(KEAP1) complex via interaction between KEAP1 and SQSTM1/p62, which sequesters the complex in inclusion bodies and promotes its degradation. Its function is as follows. Substrate-specific adapter of a BCR (BTB-CUL3-RBX1) E3 ubiquitin ligase complex that regulates the response to oxidative stress by targeting NFE2L2/NRF2 for ubiquitination. KEAP1 acts as a key sensor of oxidative and electrophilic stress: in normal conditions, the BCR(KEAP1) complex mediates ubiquitination and degradation of NFE2L2/NRF2, a transcription factor regulating expression of many cytoprotective genes. In response to oxidative stress, different electrophile metabolites trigger non-enzymatic covalent modifications of highly reactive cysteine residues in KEAP1, leading to inactivate the ubiquitin ligase activity of the BCR(KEAP1) complex, promoting NFE2L2/NRF2 nuclear accumulation and expression of phase II detoxifying enzymes. In response to selective autophagy, KEAP1 is sequestered in inclusion bodies following its interaction with SQSTM1/p62, leading to inactivation of the BCR(KEAP1) complex and activation of NFE2L2/NRF2. The BCR(KEAP1) complex also mediates ubiquitination of SQSTM1/p62, increasing SQSTM1/p62 sequestering activity and degradation. The BCR(KEAP1) complex also targets BPTF and PGAM5 for ubiquitination and degradation by the proteasome. The chain is Kelch-like ECH-associated protein 1 from Sus scrofa (Pig).